Consider the following 96-residue polypeptide: Putative pterin-4-alpha-carbinolamine dehydratase (96 aa).

Belongs to the pterin-4-alpha-carbinolamine dehydratase family.

It carries out the reaction (4aS,6R)-4a-hydroxy-L-erythro-5,6,7,8-tetrahydrobiopterin = (6R)-L-erythro-6,7-dihydrobiopterin + H2O. In Rhodospirillum rubrum (strain ATCC 11170 / ATH 1.1.1 / DSM 467 / LMG 4362 / NCIMB 8255 / S1), this protein is Putative pterin-4-alpha-carbinolamine dehydratase.